The primary structure comprises 543 residues: Intermediate filament protein ifb-2 (543 aa).

Over residues 1-10 (MSAVSYSMHR) the composition is skewed to polar residues. The disordered stretch occupies residues 1–27 (MSAVSYSMHRTTTTTSSSSHGGVSAGH). A head region spans residues 1–42 (MSAVSYSMHRTTTTTSSSSHGGVSAGHAAEEFVASAEREKQE). In terms of domain architecture, IF rod spans 39-388 (EKQEMQQLNS…KLVESEEGRF (350 aa)). The tract at residues 43–74 (MQQLNSRLEVYISRVRQLEDRNKELVIELDTL) is coil 1A. The linker 1 stretch occupies residues 75-88 (RGSLGNDIGQIKFK). The interval 89 to 223 (FNDSLVKVRR…RIHSQEITEL (135 aa)) is coil 1B. A linker 12 region spans residues 224-240 (RTLLAQAPADTREFFKN). The interval 241-387 (ELALAIREIK…RKLVESEEGR (147 aa)) is coil 2. Residues 388–542 (FTHVGQGVVV…SHIQTTVASS (155 aa)) form a tail region. In terms of domain architecture, LTD spans 420 to 538 (TRSSFKRHAK…IEKASHIQTT (119 aa)).

It belongs to the intermediate filament family. Expression is restricted to a discrete circumferential subapical layer within the intestinal terminal web (known as the 'endotube'); this layer joins directly to the apical junction complexes that connect adjacent gut cells.

It localises to the cytoplasm. Functionally, cytoplasmic intermediate filaments provide mechanical strength to cells. Not essential protein. Component of the terminal web (organelle-depleted, intermediate filament-rich layer of cytoplasm that underlies the apical microvilli of polarized epithelial cells) in embryonic through to adult gut cells. Correct localization of filaments requires let-413. This chain is Intermediate filament protein ifb-2 (ifb-2), found in Caenorhabditis elegans.